A 156-amino-acid chain; its full sequence is Oxidized purine nucleoside triphosphate hydrolase (156 aa).

Residues 3–132 enclose the Nudix hydrolase domain; that stretch reads TSKLLTLVLV…WFPLMLQKKR (130 aa). Position 8 (threonine 8) interacts with 2-oxo-dATP. O(6)-methyl-dGMP is bound by residues threonine 8, lysine 23, asparagine 33, and 35 to 38; that span reads FGGK. Lysine 23 serves as a coordination point for 8-oxo-dGTP. 2-oxo-dATP is bound by residues asparagine 33 and 35-38; that span reads FGGK. Mg(2+) contacts are provided by glycine 36, glutamate 52, glutamate 55, glutamate 56, and glutamate 100. Positions 37-58 match the Nudix box motif; that stretch reads GKVQTGETIEQAARRELLEESG. 117–120 serves as a coordination point for 2-oxo-dATP; sequence WADD. 117-120 is a binding site for O(6)-methyl-dGMP; that stretch reads WADD.

The protein belongs to the Nudix hydrolase family. As to quaternary structure, monomer. The cofactor is Mg(2+).

The protein localises to the cytoplasm. Its subcellular location is the cytosol. It localises to the mitochondrion matrix. It is found in the nucleus. The catalysed reaction is 2-oxo-dATP + H2O = 2-oxo-dAMP + diphosphate + H(+). It carries out the reaction 2-oxo-ATP + H2O = 2-oxo-AMP + diphosphate + H(+). It catalyses the reaction 8-oxo-dGTP + H2O = 8-oxo-dGMP + diphosphate + H(+). The enzyme catalyses 8-oxo-dATP + H2O = 8-oxo-dAMP + diphosphate + H(+). The catalysed reaction is O(6)-methyl-dGTP + H2O = O(6)-methyl-dGMP + diphosphate + H(+). It carries out the reaction N(6)-methyl-dATP + H2O = N(6)-methyl-dAMP + diphosphate + H(+). It catalyses the reaction N(6)-methyl-ATP + H2O = N(6)-methyl-AMP + diphosphate + H(+). With respect to regulation, inhibited by TH588. Its function is as follows. Oxidized purine nucleoside triphosphate hydrolase which is a prominent sanitizer of the oxidized nucleotide pool. Catalyzes the hydrolysis of 2-oxo-dATP (2-hydroxy-dATP) into 2-oxo-dAMP. Also has a significant hydrolase activity toward 2-oxo-ATP, 8-oxo-dGTP and 8-oxo-dATP. Through the hydrolysis of oxidized purine nucleoside triphosphates, prevents their incorporation into DNA and the subsequent transversions A:T to C:G and G:C to T:A. Also catalyzes the hydrolysis of methylated purine nucleoside triphosphate preventing their integration into DNA. Through this antimutagenic activity protects cells from oxidative stress. This Danio rerio (Zebrafish) protein is Oxidized purine nucleoside triphosphate hydrolase (nudt1).